The sequence spans 936 residues: Isoleucine--tRNA ligase (936 aa).

The short motif at 58–68 (PYANGNIHIGH) is the 'HIGH' region element. L-isoleucyl-5'-AMP is bound at residue Glu560. Positions 601 to 605 (KMSKS) match the 'KMSKS' region motif. Lys604 contributes to the ATP binding site. Zn(2+) is bound by residues Cys899, Cys902, Cys919, and Cys922.

It belongs to the class-I aminoacyl-tRNA synthetase family. IleS type 1 subfamily. Monomer. Zn(2+) serves as cofactor.

The protein resides in the cytoplasm. It catalyses the reaction tRNA(Ile) + L-isoleucine + ATP = L-isoleucyl-tRNA(Ile) + AMP + diphosphate. Its function is as follows. Catalyzes the attachment of isoleucine to tRNA(Ile). As IleRS can inadvertently accommodate and process structurally similar amino acids such as valine, to avoid such errors it has two additional distinct tRNA(Ile)-dependent editing activities. One activity is designated as 'pretransfer' editing and involves the hydrolysis of activated Val-AMP. The other activity is designated 'posttransfer' editing and involves deacylation of mischarged Val-tRNA(Ile). This Proteus mirabilis (strain HI4320) protein is Isoleucine--tRNA ligase.